The chain runs to 189 residues: Peptidyl-tRNA hydrolase (189 aa).

Tyrosine 15 lines the tRNA pocket. The Proton acceptor role is filled by histidine 20. Residues tyrosine 67, asparagine 69, and asparagine 115 each contribute to the tRNA site.

Belongs to the PTH family. As to quaternary structure, monomer.

Its subcellular location is the cytoplasm. It catalyses the reaction an N-acyl-L-alpha-aminoacyl-tRNA + H2O = an N-acyl-L-amino acid + a tRNA + H(+). Its function is as follows. Hydrolyzes ribosome-free peptidyl-tRNAs (with 1 or more amino acids incorporated), which drop off the ribosome during protein synthesis, or as a result of ribosome stalling. Functionally, catalyzes the release of premature peptidyl moieties from peptidyl-tRNA molecules trapped in stalled 50S ribosomal subunits, and thus maintains levels of free tRNAs and 50S ribosomes. This is Peptidyl-tRNA hydrolase from Symbiobacterium thermophilum (strain DSM 24528 / JCM 14929 / IAM 14863 / T).